The primary structure comprises 99 residues: Aspartyl/glutamyl-tRNA(Asn/Gln) amidotransferase subunit C (99 aa).

This sequence belongs to the GatC family. In terms of assembly, heterotrimer of A, B and C subunits.

It catalyses the reaction L-glutamyl-tRNA(Gln) + L-glutamine + ATP + H2O = L-glutaminyl-tRNA(Gln) + L-glutamate + ADP + phosphate + H(+). The catalysed reaction is L-aspartyl-tRNA(Asn) + L-glutamine + ATP + H2O = L-asparaginyl-tRNA(Asn) + L-glutamate + ADP + phosphate + 2 H(+). Functionally, allows the formation of correctly charged Asn-tRNA(Asn) or Gln-tRNA(Gln) through the transamidation of misacylated Asp-tRNA(Asn) or Glu-tRNA(Gln) in organisms which lack either or both of asparaginyl-tRNA or glutaminyl-tRNA synthetases. The reaction takes place in the presence of glutamine and ATP through an activated phospho-Asp-tRNA(Asn) or phospho-Glu-tRNA(Gln). The polypeptide is Aspartyl/glutamyl-tRNA(Asn/Gln) amidotransferase subunit C (Albidiferax ferrireducens (strain ATCC BAA-621 / DSM 15236 / T118) (Rhodoferax ferrireducens)).